A 918-amino-acid chain; its full sequence is Isoleucine--tRNA ligase 1 (918 aa).

Residues 57–67 carry the 'HIGH' region motif; it reads PYANGDIHIGH. Position 553 (Glu-553) interacts with L-isoleucyl-5'-AMP. The 'KMSKS' region motif lies at 594 to 598; that stretch reads KMSKS. An ATP-binding site is contributed by Lys-597. Residues Cys-885, Cys-888, Cys-905, and Cys-908 each contribute to the Zn(2+) site.

The protein belongs to the class-I aminoacyl-tRNA synthetase family. IleS type 1 subfamily. As to quaternary structure, monomer. Zn(2+) is required as a cofactor.

The protein resides in the cytoplasm. The catalysed reaction is tRNA(Ile) + L-isoleucine + ATP = L-isoleucyl-tRNA(Ile) + AMP + diphosphate. In terms of biological role, catalyzes the attachment of isoleucine to tRNA(Ile). As IleRS can inadvertently accommodate and process structurally similar amino acids such as valine, to avoid such errors it has two additional distinct tRNA(Ile)-dependent editing activities. One activity is designated as 'pretransfer' editing and involves the hydrolysis of activated Val-AMP. The other activity is designated 'posttransfer' editing and involves deacylation of mischarged Val-tRNA(Ile). This is Isoleucine--tRNA ligase 1 from Oceanobacillus iheyensis (strain DSM 14371 / CIP 107618 / JCM 11309 / KCTC 3954 / HTE831).